The sequence spans 51 residues: Large ribosomal subunit protein bL33 (51 aa).

Belongs to the bacterial ribosomal protein bL33 family.

This chain is Large ribosomal subunit protein bL33, found in Acinetobacter baylyi (strain ATCC 33305 / BD413 / ADP1).